A 319-amino-acid chain; its full sequence is G-protein coupled receptor 171 (319 aa).

Residues 1-21 (MTNSSFFCPVYKDLEPFTYFF) are Extracellular-facing. A glycan (N-linked (GlcNAc...) asparagine) is linked at Asn-3. A helical membrane pass occupies residues 22 to 42 (YLVFLVGIIGSCFATWAFIQK). Over 43–48 (NTNHRC) the chain is Cytoplasmic. Residues 49 to 69 (VSIYLINLLTADFLLTLALPV) form a helical membrane-spanning segment. The Extracellular portion of the chain corresponds to 70–89 (KIVVDLGVAPWKLKIFHCQV). Residues 90-110 (TACLIYINMYLSIIFLAFVSI) form a helical membrane-spanning segment. Topologically, residues 111–132 (DRCLQLTHSCKIYRIQEPGFAK) are cytoplasmic. Residues 133–153 (MISTVVWLMVLLIMVPNMMIP) form a helical membrane-spanning segment. The Extracellular portion of the chain corresponds to 154–181 (IKDIKEKSNVGCMEFKKEFGRNWHLLTN). The chain crosses the membrane as a helical span at residues 182–202 (FICVAIFLNFSAIILISNCLV). The Cytoplasmic portion of the chain corresponds to 203-224 (IRQLYRNKDNENYPNVKKALIN). A helical membrane pass occupies residues 225-245 (ILLVTTGYIICFVPYHIVRIP). Over 246-268 (YTLSQTEVITDCSTRISLFKAKE) the chain is Extracellular. A helical membrane pass occupies residues 269-289 (ATLLLAVSNLCFDPILYYHLS). At 290-319 (KAFRSKVTETFASPKETKAQKEKLRCENNA) the chain is on the cytoplasmic side.

This sequence belongs to the G-protein coupled receptor 1 family. Expressed in both T-cell subsets and natural killer cells, while it is undetectable in B cells or CD14(+) monocytes. Expressed in peripheral blood mononuclear cells (PBMC) and Jurkat cells (at protein level).

The protein localises to the cell membrane. Its function is as follows. G-protein coupled receptor for Big LEN, a 16-amino acid neuropeptide produced from the precursor protein, proSAAS (encoded by PCSK1N). Acts through a G(i)-alpha-mediated pathway in response to Big LEN. Big LEN-GPR171 system plays an important role in regulating feeding and metabolism. Also plays a role in modulating fear and anxiety-like behaviors in the basolateral amygdala. Big LEN-GPR171 modulates the mu-type opioid receptor signaling and antinociception. Acts as a negative regulator T cell function. The polypeptide is G-protein coupled receptor 171 (Homo sapiens (Human)).